Here is a 342-residue protein sequence, read N- to C-terminus: Delta-aminolevulinic acid dehydratase (342 aa).

Zn(2+) is bound by residues Cys133, Cys135, and Cys143. Lys210 acts as the Schiff-base intermediate with substrate in catalysis. Residues Arg220 and Arg232 each contribute to the 5-aminolevulinate site. Ser254 carries the post-translational modification Phosphoserine. Residue Lys263 is the Schiff-base intermediate with substrate of the active site. 5-aminolevulinate-binding residues include Ser290 and Tyr329.

The protein belongs to the ALAD family. In terms of assembly, homooctamer. Zn(2+) is required as a cofactor.

It catalyses the reaction 2 5-aminolevulinate = porphobilinogen + 2 H2O + H(+). It participates in porphyrin-containing compound metabolism; protoporphyrin-IX biosynthesis; coproporphyrinogen-III from 5-aminolevulinate: step 1/4. Inhibited by divalent lead ions. Functionally, catalyzes an early step in the biosynthesis of tetrapyrroles. Binds two molecules of 5-aminolevulinate per subunit, each at a distinct site, and catalyzes their condensation to form porphobilinogen. The chain is Delta-aminolevulinic acid dehydratase (HEM2) from Saccharomyces cerevisiae (strain ATCC 204508 / S288c) (Baker's yeast).